The following is a 242-amino-acid chain: 3-oxoacyl-[acyl-carrier-protein] reductase FabG (242 aa).

NADP(+) is bound by residues 10–13, Thr35, 57–58, and Asn84; these read GSTR and NV. Ser136 contacts substrate. Tyr149 acts as the Proton acceptor in catalysis. Residues 149-153 and Ile182 each bind NADP(+); that span reads YCAAK.

The protein belongs to the short-chain dehydrogenases/reductases (SDR) family. Homotetramer.

It catalyses the reaction a (3R)-hydroxyacyl-[ACP] + NADP(+) = a 3-oxoacyl-[ACP] + NADPH + H(+). Its pathway is lipid metabolism; fatty acid biosynthesis. In terms of biological role, catalyzes the NADPH-dependent reduction of beta-ketoacyl-ACP substrates to beta-hydroxyacyl-ACP products, the first reductive step in the elongation cycle of fatty acid biosynthesis. The chain is 3-oxoacyl-[acyl-carrier-protein] reductase FabG (fabG) from Haemophilus influenzae (strain ATCC 51907 / DSM 11121 / KW20 / Rd).